We begin with the raw amino-acid sequence, 97 residues long: MNKSMLIFFTILFLTYIIEEKEALKVEDLPEPESYKRAKQLAVKDAKGDKNAETIALNFLKQNRRDCMKNCKLVPTCALLSPECCPDKTDVCKKLAL.

An N-terminal signal peptide occupies residues 1 to 23; the sequence is MNKSMLIFFTILFLTYIIEEKEA.

Contains 3 disulfide bonds. As to expression, expressed by the venom gland.

The protein localises to the secreted. The sequence is that of U-scoloptoxin(10)-Ssd2a from Scolopendra dehaani (Thai centipede).